Here is an 80-residue protein sequence, read N- to C-terminus: Clavanin-A (80 aa).

Positions 1–19 are cleaved as a signal peptide; it reads MKTTILILLILGLGINAKS. Positions 20 to 29 are excised as a propeptide; the sequence is LEERKSEEEK. A Phenylalanine amide modification is found at Phe-52. Residues 54–80 constitute a propeptide that is removed on maturation; it reads DDQQDNGKFYGHYAEDNGKHWYDTGDQ.

The protein localises to the secreted. In terms of biological role, has antimicrobial activity. This is Clavanin-A from Styela clava (Sea squirt).